We begin with the raw amino-acid sequence, 131 residues long: MVTLYTSPSCTSCRKARAWLEEHDIPYKERNIFSEPLSLDEIKEILRMTEDGTDEIISTRSKTFQKLNVDLDSLPLQQLFELIQKNPGLLRRPIIIDEKRLQVGYNEDEIRRFLPRRVRTYQLREAQKMVN.

A disulfide bridge connects residues Cys-10 and Cys-13.

It belongs to the ArsC family. Spx subfamily. Interacts with the C-terminal domain of the alpha subunit of the RNAP.

The protein localises to the cytoplasm. Its function is as follows. Global transcriptional regulator that plays a key role in stress response and exerts either positive or negative regulation of genes. Acts by interacting with the C-terminal domain of the alpha subunit of the RNA polymerase (RNAP). This interaction can enhance binding of RNAP to the promoter region of target genes and stimulate their transcription, or block interaction of RNAP with activator. The sequence is that of Global transcriptional regulator Spx from Listeria innocua serovar 6a (strain ATCC BAA-680 / CLIP 11262).